Here is a 249-residue protein sequence, read N- to C-terminus: ATP synthase subunit a, chloroplastic (249 aa).

Helical transmembrane passes span 40–60 (QVLI…VLAV), 97–117 (VPFI…GALL), 136–156 (INTT…AGLS), 201–221 (LVVV…VMFL), and 222–242 (GLFT…AYIG).

The protein belongs to the ATPase A chain family. In terms of assembly, F-type ATPases have 2 components, CF(1) - the catalytic core - and CF(0) - the membrane proton channel. CF(1) has five subunits: alpha(3), beta(3), gamma(1), delta(1), epsilon(1). CF(0) has four main subunits: a, b, b' and c.

It is found in the plastid. The protein localises to the chloroplast thylakoid membrane. Functionally, key component of the proton channel; it plays a direct role in the translocation of protons across the membrane. This chain is ATP synthase subunit a, chloroplastic, found in Arabis hirsuta (Hairy rock-cress).